The primary structure comprises 446 residues: SPARC-related modular calcium-binding protein 2 (446 aa).

The first 21 residues, 1–21 (MLLPQLCWLPLLAGLLPPVPA), serve as a signal peptide directing secretion. In terms of domain architecture, Kazal-like spans 34-86 (QDKDKDCSLDCAGSPQKPLCASDGRTFLSRCEFQRAKCKDPQLEIAYRGNCKD). Intrachain disulfides connect Cys-40–Cys-71, Cys-44–Cys-64, Cys-53–Cys-84, Cys-90–Cys-113, Cys-124–Cys-131, and Cys-133–Cys-153. A Thyroglobulin type-1 1 domain is found at 87–153 (VSRCVAERKY…TAVAHKTPRC (67 aa)). The segment at 147–228 (AHKTPRCPGS…EHQSALEEAK (82 aa)) is disordered. A compositionally biased stretch (basic and acidic residues) spans 161–172 (LPQREGTGKTDD). N-linked (GlcNAc...) asparagine glycosylation is present at Asn-206. Residues 206-216 (NKTNKNSVSSC) are compositionally biased toward polar residues. Positions 213–281 (VSSCDQEHQS…TSTRYEQPKC (69 aa)) constitute a Thyroglobulin type-1 2 domain. 3 disulfide bridges follow: Cys-216-Cys-240, Cys-251-Cys-258, and Cys-260-Cys-281. A compositionally biased stretch (basic and acidic residues) spans 217 to 228 (DQEHQSALEEAK). 2 EF-hand domains span residues 347–382 (LEER…LRKK) and 384–419 (KPKK…AKED). Residues Asp-360, Asn-362, Ser-364, Asp-366, Glu-371, Asp-397, Asn-399, Asp-401, Ser-403, and Glu-408 each contribute to the Ca(2+) site. An N-linked (GlcNAc...) asparagine glycan is attached at Asn-362. The disordered stretch occupies residues 416 to 446 (AKEDGKADTKKRHTPRGHAESTSNRQPRKQG).

In terms of assembly, binds various proteins from the extracellular matrix.

The protein localises to the secreted. It is found in the extracellular space. Its subcellular location is the extracellular matrix. The protein resides in the basement membrane. Its function is as follows. Promotes matrix assembly and cell adhesiveness. Can stimulate endothelial cell proliferation, migration, as well as angiogenesis. The polypeptide is SPARC-related modular calcium-binding protein 2 (SMOC2) (Homo sapiens (Human)).